Reading from the N-terminus, the 1165-residue chain is ATP-dependent helicase/deoxyribonuclease subunit B (1165 aa).

In terms of domain architecture, UvrD-like helicase ATP-binding spans 1–324 (MRFIIGGAGS…LVEAQNRREE (324 aa)). 6–13 (GGAGSGKS) contributes to the ATP binding site. A UvrD-like helicase C-terminal domain is found at 282–597 (PLRFRGAPEL…IVGTVERSRH (316 aa)). [4Fe-4S] cluster is bound by residues cysteine 803, cysteine 1121, cysteine 1124, and cysteine 1130.

The protein belongs to the helicase family. AddB/RexB type 1 subfamily. Heterodimer of AddA and AddB. It depends on Mg(2+) as a cofactor. [4Fe-4S] cluster serves as cofactor.

In terms of biological role, the heterodimer acts as both an ATP-dependent DNA helicase and an ATP-dependent, dual-direction single-stranded exonuclease. Recognizes the chi site generating a DNA molecule suitable for the initiation of homologous recombination. The AddB subunit has 5' -&gt; 3' nuclease activity but not helicase activity. This Symbiobacterium thermophilum (strain DSM 24528 / JCM 14929 / IAM 14863 / T) protein is ATP-dependent helicase/deoxyribonuclease subunit B.